The chain runs to 210 residues: MTTLETLKWDGKKSGKVTLDLTVAKETSSADLIHRAVLRQLANKRQGTASTLTRSEVRGGGRKPYKQKGTGRARQGSIRTPLRPGGGIIFGPKPRSYNLDMNRKERRLALRTALMSRVSDMKAVEDFGSTLKQPKTSDIINGLARLGIQKNEKVLVILDSPSDVIKKSINNIEKVKLIAADQLNVFDILNANKLLIGQSAIDKIQEVYAS.

Residues 46–89 form a disordered region; the sequence is QGTASTLTRSEVRGGGRKPYKQKGTGRARQGSIRTPLRPGGGII. A compositionally biased stretch (basic residues) spans 60–71; it reads GGRKPYKQKGTG.

The protein belongs to the universal ribosomal protein uL4 family. Part of the 50S ribosomal subunit.

In terms of biological role, one of the primary rRNA binding proteins, this protein initially binds near the 5'-end of the 23S rRNA. It is important during the early stages of 50S assembly. It makes multiple contacts with different domains of the 23S rRNA in the assembled 50S subunit and ribosome. Functionally, forms part of the polypeptide exit tunnel. This chain is Large ribosomal subunit protein uL4, found in Prochlorococcus marinus (strain MIT 9215).